We begin with the raw amino-acid sequence, 429 residues long: Ribosomal RNA small subunit methyltransferase B (429 aa).

Residues 254–260 (CAAPGGK), aspartate 277, aspartate 303, and aspartate 322 contribute to the S-adenosyl-L-methionine site. Cysteine 375 serves as the catalytic Nucleophile.

It belongs to the class I-like SAM-binding methyltransferase superfamily. RsmB/NOP family.

The protein resides in the cytoplasm. The enzyme catalyses cytidine(967) in 16S rRNA + S-adenosyl-L-methionine = 5-methylcytidine(967) in 16S rRNA + S-adenosyl-L-homocysteine + H(+). In terms of biological role, specifically methylates the cytosine at position 967 (m5C967) of 16S rRNA. The protein is Ribosomal RNA small subunit methyltransferase B of Photorhabdus laumondii subsp. laumondii (strain DSM 15139 / CIP 105565 / TT01) (Photorhabdus luminescens subsp. laumondii).